A 92-amino-acid polypeptide reads, in one-letter code: MSTISRDSCPALRAGVRLQHDRARDQWVLLAPERVVELDDIALVVAQRYDGTQSLAQIAQTLAAEFDADASEIETDVIELTTTLHQKRLLRL.

This sequence belongs to the PqqD family. Monomer. Interacts with PqqE.

Its pathway is cofactor biosynthesis; pyrroloquinoline quinone biosynthesis. Functionally, functions as a PqqA binding protein and presents PqqA to PqqE, in the pyrroloquinoline quinone (PQQ) biosynthetic pathway. This chain is PqqA binding protein, found in Xanthomonas campestris pv. campestris (strain 8004).